A 394-amino-acid chain; its full sequence is Ceramide glucosyltransferase-A (394 aa).

At 1-10 (MAVLDLALQG) the chain is on the lumenal side. A helical transmembrane segment spans residues 11-32 (LAIFGCVLFFVLWFMHFLSIVY). The Cytoplasmic segment spans residues 33-195 (TRLHLNKKIS…QVYFGTSHPR (163 aa)). Asp92 is a short sequence motif (D1). Position 144 (Asp144) is a short sequence motif, D2. The helical transmembrane segment at 196-215 (SYISANVTGFKCVTGMSCLM) threads the bilayer. Topologically, residues 216-287 (RKEVLDQAGG…KLRINMLPAT (72 aa)) are lumenal. A short sequence motif (D3) is located at residue Asp236. The Proton acceptor role is filled by Asp236. The (Q/R)XXRW signature appears at 272–276 (RMIRW). A helical membrane pass occupies residues 288–304 (IICEPISECFVASLIIG). Topologically, residues 305 to 309 (WAAHH) are cytoplasmic. A helical transmembrane segment spans residues 310–328 (IFRWDIMVFFMCHCLAWFI). Residues 329 to 348 (FDYIQLRGVQGGPLNFSKLD) lie on the Lumenal side of the membrane. A helical membrane pass occupies residues 349–369 (YAVAWFIRESMTIYIFLSALW). Topologically, residues 370–394 (DPTISWRTGRFRLRCGGTAEEILDV) are cytoplasmic.

This sequence belongs to the glycosyltransferase 2 family. At the late gastrula stage, weakly expressed ubiquitously. As neurulation proceeds (stages 15-16), expression moves towards the dorsal structures: involuted paraxial mesoderm and neural folds. In the tailbud embryo (stage 28), expression is restricted to the notochord. At later stages (stage 35), expression remains in the notochord and also appears weakly in the cephalic region.

It is found in the golgi apparatus membrane. It carries out the reaction an N-acylsphing-4-enine + UDP-alpha-D-glucose = a beta-D-glucosyl-(1&lt;-&gt;1')-N-acylsphing-4-enine + UDP + H(+). It catalyses the reaction UDP-alpha-D-xylose + an N-acylsphing-4-enine = a beta-D-xylosyl-(1&lt;-&gt;1')-N-acylsphing-4-enine + UDP + H(+). The catalysed reaction is N-(9Z-octadecenoyl)-sphing-4-enine + UDP-alpha-D-xylose = beta-D-xylosyl-(1&lt;-&gt;1')-N-(9Z-octadecenoyl)-sphing-4-enine + UDP + H(+). Its pathway is lipid metabolism; sphingolipid metabolism. Participates in the initial step of the glucosylceramide-based glycosphingolipid/GSL synthetic pathway at the cytosolic surface of the Golgi. Catalyzes the transfer of glucose from UDP-glucose to ceramide to produce glucosylceramide/GlcCer (such as beta-D-glucosyl-(1&lt;-&gt;1')-N-acylsphing-4-enine). Glucosylceramide is the core component of glycosphingolipids/GSLs, amphipathic molecules consisting of a ceramide lipid moiety embedded in the outer leaflet of the membrane, linked to one of hundreds of different externally oriented oligosaccharide structures. Glycosphingolipids are essential components of membrane microdomains that mediate membrane trafficking and signal transduction. They are implicated in many fundamental cellular processes, including growth, differentiation, migration, morphogenesis, cell-to-cell and cell-to-matrix interactions. Glycosphingolipids are required for convergence extension movements during early development. Catalyzes the synthesis of xylosylceramide/XylCer (such as beta-D-xylosyl-(1&lt;-&gt;1')-N-acylsphing-4-enine) using UDP-Xyl as xylose donor. The polypeptide is Ceramide glucosyltransferase-A (ugcg-a) (Xenopus laevis (African clawed frog)).